We begin with the raw amino-acid sequence, 473 residues long: Photosystem II CP43 reaction center protein (473 aa).

Residues 1–14 (MKTLYSLRRFYPVE) constitute a propeptide that is removed on maturation. Thr-15 bears the N-acetylthreonine mark. Thr-15 is modified (phosphothreonine). 5 helical membrane passes run 69 to 93 (LFEV…PHLA), 134 to 155 (LLGP…KDRN), 178 to 200 (KALY…RKIT), 255 to 275 (KPFA…LSYS), and 291 to 312 (WFNN…ASQA). Residue Glu-367 coordinates [CaMn4O5] cluster. A helical transmembrane segment spans residues 447 to 471 (RARAAAAGFEKGIDRDFEPVLFMTP).

It belongs to the PsbB/PsbC family. PsbC subfamily. In terms of assembly, PSII is composed of 1 copy each of membrane proteins PsbA, PsbB, PsbC, PsbD, PsbE, PsbF, PsbH, PsbI, PsbJ, PsbK, PsbL, PsbM, PsbT, PsbX, PsbY, PsbZ, Psb30/Ycf12, at least 3 peripheral proteins of the oxygen-evolving complex and a large number of cofactors. It forms dimeric complexes. It depends on Binds multiple chlorophylls and provides some of the ligands for the Ca-4Mn-5O cluster of the oxygen-evolving complex. It may also provide a ligand for a Cl- that is required for oxygen evolution. PSII binds additional chlorophylls, carotenoids and specific lipids. as a cofactor.

It is found in the plastid. The protein localises to the chloroplast thylakoid membrane. Functionally, one of the components of the core complex of photosystem II (PSII). It binds chlorophyll and helps catalyze the primary light-induced photochemical processes of PSII. PSII is a light-driven water:plastoquinone oxidoreductase, using light energy to abstract electrons from H(2)O, generating O(2) and a proton gradient subsequently used for ATP formation. The protein is Photosystem II CP43 reaction center protein of Cucumis sativus (Cucumber).